Consider the following 188-residue polypeptide: UPF0301 protein XC_1365 (188 aa).

It belongs to the UPF0301 (AlgH) family.

The protein is UPF0301 protein XC_1365 of Xanthomonas campestris pv. campestris (strain 8004).